The chain runs to 3112 residues: Genome polyprotein (3112 aa).

The 150-residue stretch at 234–383 folds into the Peptidase S30 domain; that stretch reads KLTQRRANKI…PDCLEGLTYY (150 aa). Residues histidine 286, aspartate 301, and serine 333 each act as for P1 proteinase activity in the active site. The 122-residue stretch at 729-850 folds into the Peptidase C6 domain; the sequence is TLVPKSGFCY…IETFKDYRIG (122 aa). Active-site for helper component proteinase activity residues include cysteine 737 and histidine 809. The 152-residue stretch at 1278 to 1429 folds into the Helicase ATP-binding domain; that stretch reads NIATGAGNEF…CVPTNHKVDV (152 aa). Residue 1291–1298 participates in ATP binding; it reads GDVGSGKS. The short motif at 1379 to 1382 is the DECH box element; sequence DECH. Positions 1444 to 1627 constitute a Helicase C-terminal domain; that stretch reads SIDSHAEGLR…EVNFVTREQV (184 aa). A Peptidase C4 domain is found at 2096–2311; the sequence is DDNYVPHSRC…ISWKGVPTNM (216 aa). Residues histidine 2140, aspartate 2174, and cysteine 2243 each act as for nuclear inclusion protein A activity in the active site. The region spanning 2569–2687 is the RdRp catalytic domain; the sequence is WKFIDADGSR…NAPQGVCETI (119 aa). The segment at 2818–2867 is disordered; the sequence is HSGADQSGVVKDQTGDKAEGSGTKTEDPPNQTTDPVNNPSNGGNKDAPQN. Basic and acidic residues predominate over residues 2830–2844; sequence QTGDKAEGSGTKTED. Positions 2845–2867 are enriched in polar residues; it reads PPNQTTDPVNNPSNGGNKDAPQN.

The protein belongs to the potyviridae genome polyprotein family. VPg is uridylylated by the polymerase and is covalently attached to the 5'-end of the genomic RNA. This uridylylated form acts as a nucleotide-peptide primer for the polymerase. In terms of processing, genome polyprotein of potyviruses undergoes post-translational proteolytic processing by the main proteinase NIa-pro resulting in the production of at least ten individual proteins. The P1 proteinase and the HC-pro cleave only their respective C-termini autocatalytically. 6K1 is essential for proper proteolytic separation of P3 from CI.

The protein localises to the host cytoplasmic vesicle. The protein resides in the virion. The catalysed reaction is RNA(n) + a ribonucleoside 5'-triphosphate = RNA(n+1) + diphosphate. The enzyme catalyses Hydrolyzes glutaminyl bonds, and activity is further restricted by preferences for the amino acids in P6 - P1' that vary with the species of potyvirus, e.g. Glu-Xaa-Xaa-Tyr-Xaa-Gln-|-(Ser or Gly) for the enzyme from tobacco etch virus. The natural substrate is the viral polyprotein, but other proteins and oligopeptides containing the appropriate consensus sequence are also cleaved.. It catalyses the reaction Hydrolyzes a Gly-|-Gly bond at its own C-terminus, commonly in the sequence -Tyr-Xaa-Val-Gly-|-Gly, in the processing of the potyviral polyprotein.. Required for aphid transmission and also has proteolytic activity. Only cleaves a Gly-Gly dipeptide at its own C-terminus. Interacts with virions and aphid stylets. Acts as a suppressor of RNA-mediated gene silencing, also known as post-transcriptional gene silencing (PTGS), a mechanism of plant viral defense that limits the accumulation of viral RNAs. May have RNA-binding activity. Its function is as follows. Has helicase activity. It may be involved in replication. Functionally, indispensable for virus replication. In terms of biological role, mediates the cap-independent, EIF4E-dependent translation of viral genomic RNAs. Binds to the cap-binding site of host EIF4E and thus interferes with the host EIF4E-dependent mRNA export and translation. VPg-RNA directly binds EIF4E and is a template for transcription. Also forms trimeric complexes with EIF4E-EIF4G, which are templates for translation. Has RNA-binding and proteolytic activities. Its function is as follows. An RNA-dependent RNA polymerase that plays an essential role in the virus replication. Functionally, involved in aphid transmission, cell-to-cell and systemis movement, encapsidation of the viral RNA and in the regulation of viral RNA amplification. This is Genome polyprotein from Triticum aestivum (Wheat).